A 526-amino-acid chain; its full sequence is Cytochrome P450 monooxygenase SAT11 (526 aa).

A helical transmembrane segment spans residues 18-38 (AFLLIAMLYLGYLLCICFYNI). Residues asparagine 125 and asparagine 447 are each glycosylated (N-linked (GlcNAc...) asparagine). Cysteine 455 lines the heme pocket. An N-linked (GlcNAc...) asparagine glycan is attached at asparagine 520.

This sequence belongs to the cytochrome P450 family. It depends on heme as a cofactor.

The protein resides in the membrane. Its pathway is mycotoxin biosynthesis. Functionally, cytochrome P450 monooxygenase; part of the satratoxin SC2 cluster involved in the biosynthesis of satratoxins, trichothecene mycotoxins that are associated with human food poisonings. Satratoxins are suggested to be made by products of multiple gene clusters (SC1, SC2 and SC3) that encode 21 proteins in all, including polyketide synthases, acetyltransferases, and other enzymes expected to modify the trichothecene skeleton. SC1 encodes 10 proteins, SAT1 to SAT10. The largest are SAT8, which encodes a putative polyketide synthase (PKS) with a conventional non-reducing architecture, and SAT10, a putative protein containing four ankyrin repeats and thus may be involved in protein scaffolding. The putative short-chain reductase SAT3 may assist the PKS in some capacity. SAT6 contains a secretory lipase domain and acts probably as a trichothecene esterase. SAT5 encodes a putative acetyltransferase, and so, with SAT6, may affect endogenous protection from toxicity. The probable transcription factor SAT9 may regulate the expression of the SC1 cluster. SC2 encodes proteins SAT11 to SAT16, the largest of which encodes the putative reducing PKS SAT13. SAT11 is a cytochrome P450 monooxygenase, while SAT14 and SAT16 are probable acetyltransferases. The SC2 cluster may be regulated by the transcription factor SAT15. SC3 is a small cluster that encodes 5 proteins, SAT17 to SAT21. SAT21 is a putative MFS-type transporter which may have a role in exporting secondary metabolites. The four other proteins putatively encoded in SC3 include the taurine hydroxylase-like protein SAT17, the O-methyltransferase SAT18, the acetyltransferase SAT19, and the Cys6-type zinc finger SAT20, the latter being probably involved in regulation of SC3 expression. The polypeptide is Cytochrome P450 monooxygenase SAT11 (Stachybotrys chartarum (strain CBS 109288 / IBT 7711) (Toxic black mold)).